A 335-amino-acid polypeptide reads, in one-letter code: L-carnitine dehydrogenase (335 aa).

G29–G34 is an NAD(+) binding site.

It belongs to the 3-hydroxyacyl-CoA dehydrogenase family. L-carnitine dehydrogenase subfamily. Homodimer.

The protein localises to the cytoplasm. The catalysed reaction is carnitine + NAD(+) = 3-dehydrocarnitine + NADH + H(+). Its pathway is amine and polyamine metabolism; carnitine metabolism. Catalyzes the NAD(+)-dependent oxidation of L-carnitine to 3-dehydrocarnitine. The protein is L-carnitine dehydrogenase of Streptomyces griseus subsp. griseus (strain JCM 4626 / CBS 651.72 / NBRC 13350 / KCC S-0626 / ISP 5235).